Consider the following 185-residue polypeptide: Lysozyme g (185 aa).

Intrachain disulfides connect C4–C60 and C18–C29. The active site involves E73.

The protein belongs to the glycosyl hydrolase 23 family.

The protein resides in the secreted. The catalysed reaction is Hydrolysis of (1-&gt;4)-beta-linkages between N-acetylmuramic acid and N-acetyl-D-glucosamine residues in a peptidoglycan and between N-acetyl-D-glucosamine residues in chitodextrins.. This Cygnus atratus (Black swan) protein is Lysozyme g.